The primary structure comprises 63 residues: Translational regulator CsrA (63 aa).

The protein belongs to the CsrA/RsmA family. In terms of assembly, homodimer; the beta-strands of each monomer intercalate to form a hydrophobic core, while the alpha-helices form wings that extend away from the core.

The protein localises to the cytoplasm. Its function is as follows. A key translational regulator that binds mRNA to regulate translation initiation and/or mRNA stability. Mediates global changes in gene expression, shifting from rapid growth to stress survival by linking envelope stress, the stringent response and the catabolite repression systems. Usually binds in the 5'-UTR; binding at or near the Shine-Dalgarno sequence prevents ribosome-binding, repressing translation, binding elsewhere in the 5'-UTR can activate translation and/or stabilize the mRNA. Its function is antagonized by small RNA(s). The sequence is that of Translational regulator CsrA from Alteromonas mediterranea (strain DSM 17117 / CIP 110805 / LMG 28347 / Deep ecotype).